The chain runs to 1142 residues: MSHAPRYAELRCKSCFSFLEGASHPEELVGRAAELGLSALALADVNGLYGIVRAHAEAKRQGLPLIVGAELVVAGLAPGRPARLVLLAQDREGYAGLCRLVTRAHCGEGWTGAPERRERDAVAVPFEAVAAGARGLFALYPGADGDAVARLKDAFGRRAALAVTRHRVAGEEARVLAARSAGRRLGVPVAVTNDVHTHARARQVLQDVLTCVRHGTTVDRAGRRLFPNAERTLKGPEELARLWSDFPEGLAAAADIADQCRFRMEEIRGEHPLPPVVVERGALAGGVEVATSSPAQAAREGARTATPSLSLRASLPAERPAAPEPEGPAASAPEGPASSEPGEPGLAGAGGGTGAAAGTDRDGALAGMSLLRELVREGARWRYGGEPPEDVARQLARELDLVESLGYASYFLTVWDVVRFARSRGILCQGRGSAANSAVCYVLGITSIDPVRMGLLFERFISAERGEPPDIDVDFEHERREEVLQYVYQRYGRDRAGMVCEVITYRGKSALRDVGKALGLSLGQVDRLAKLIGTYEDLGQVGPELLAQAGLDAADSERVRMTLALARELQGFPRHLSIHVGGFVITRRPLCETVPIEPAAMPGRTIVQWDKDDLSELDLLKVDLLGLGMLTALSRALALLARHRPAPASPTAVPHPDALATIPAEDPEVYEMLGRADSIGVFQVESRAQMSLAPRLRPRNFYDLVISVAIIRPGPIQGGMIHPYLRRRDGKEQVRYPYAPLEPVLARTLGVPLFQEQAMRLAVIAAGFTPGEADELRRVMTHRRSHEKLAAMKARLVAGMAERGISGADAEEIFKQLLGFAGYGFPESHAASFALLVYASAWLKRYHPAAFACALLNSQPMGFYAPHTLVEDAKRHGVEVRGVDVGCSGWESSLEGAAPGRPAAPGETAVLRVGLHAVRGLPRAVGEAILEARAAGPFGSVAELVRRARLSRAWLVRLAEAGALGALAPDRRDAVWRSLAVEADGGDLFAGLAPPEPEVALPAASAADEVSADFATTGLSVRGHPMALVRPGLGGDRIRTARELGRLPDRAPVEVAGLVIVRQRPETARGIVFVSLEDETGIANLVVMPDVYERFRPVVRGAPFLLARGRVERSGKVVNVRVDSVAPLALAPSMGARARDFH.

The interval 291-361 (TSSPAQAARE…GTGAAAGTDR (71 aa)) is disordered. 2 stretches are compositionally biased toward low complexity: residues 311-320 (LRASLPAERP) and 327-344 (GPAASAPEGPASSEPGEP). The segment covering 345-355 (GLAGAGGGTGA) has biased composition (gly residues).

Belongs to the DNA polymerase type-C family. DnaE2 subfamily.

It is found in the cytoplasm. The catalysed reaction is DNA(n) + a 2'-deoxyribonucleoside 5'-triphosphate = DNA(n+1) + diphosphate. Functionally, DNA polymerase involved in damage-induced mutagenesis and translesion synthesis (TLS). It is not the major replicative DNA polymerase. The polypeptide is Error-prone DNA polymerase (Anaeromyxobacter dehalogenans (strain 2CP-1 / ATCC BAA-258)).